Here is a 184-residue protein sequence, read N- to C-terminus: ATP synthase subunit b, chloroplastic (184 aa).

The chain crosses the membrane as a helical span at residues 27 to 49 (LATNPINLSVVFGVLIFFGKGVL).

This sequence belongs to the ATPase B chain family. F-type ATPases have 2 components, F(1) - the catalytic core - and F(0) - the membrane proton channel. F(1) has five subunits: alpha(3), beta(3), gamma(1), delta(1), epsilon(1). F(0) has four main subunits: a(1), b(1), b'(1) and c(10-14). The alpha and beta chains form an alternating ring which encloses part of the gamma chain. F(1) is attached to F(0) by a central stalk formed by the gamma and epsilon chains, while a peripheral stalk is formed by the delta, b and b' chains.

The protein localises to the plastid. The protein resides in the chloroplast thylakoid membrane. Functionally, f(1)F(0) ATP synthase produces ATP from ADP in the presence of a proton or sodium gradient. F-type ATPases consist of two structural domains, F(1) containing the extramembraneous catalytic core and F(0) containing the membrane proton channel, linked together by a central stalk and a peripheral stalk. During catalysis, ATP synthesis in the catalytic domain of F(1) is coupled via a rotary mechanism of the central stalk subunits to proton translocation. Its function is as follows. Component of the F(0) channel, it forms part of the peripheral stalk, linking F(1) to F(0). This chain is ATP synthase subunit b, chloroplastic, found in Barbarea verna (Land cress).